The chain runs to 1503 residues: MSKQQRRKGNAKNASSASAHGYLAQGGENFVGLTPEMNIFEMASSNRLSNFSGIDDETRIVMRKLTKKDCQTREKGLRELTNIIAETSSIENCYEHFCGLVPQLSTDGSPTVRLLTMKTITLFLVKLEKSACKGLKKIIPMVLFARCDVTNGVAAAAGAVIRDGFEADKKQKVIQLFAPLVFEMAAKIVQGKHDLSVPVEYDASEDREARKSRLETQSLNVFLSYIKEFGADSTIWEEEARKLFENIAFLKMVFGGTNAALKVQVLNLAYRFKNNVEVILNTPSIVTYIQNHLDSQTFTPECSTAWEGMIILLPSAQFHTKVSLQNGIYPRFLNVIRKKGNHWRVLQHFLLPAVVLLLKEMGSLENNMKVLGTIMESFTDNLPWPTDASINAVLSWFNAFSDFVRWILTNDRINLVVWEKLHPLIVTVTEQAMTFPTKEIAECVTDLLQWIIELKTINEADVSTLLLNIESKIVGAGTENSRLIKHLLTEPGKNIVLSNLHANLLSSPELVDFQIIKNLSCSENDYFNATSQKISNFSFIEKTENFDITQAGDIVRLIKLLLENQEIKSLNISVKNDHVGRRLLLTGGSTIWNKLLKNVPVSTFQNMINYWHEKRNGTAIADAVSFLKEMGVEMDTKQAAENVEFLITLLRKMKSTDVSNEAEKNVLILKLFTAIFESDEDAKSEHYNCLSEHLTSDFNSGQFFEKLFASSEEYDIERILETACRVDKLIDLCEEQTRQNIVNNVLLSGKQCGTIIEQFQFLELEVMSCSTKPTVISTTHQHCYSHLDEHKAKEIVTESARIALFNISSKCECFFLISHEQFFFSDYNSAHQVFGWQVISIISALEKRYSLVALTEELQRSRREIEERLIRSDEVRFKLDDSSPCIFLADAYDMSFEQKKKYIQCQAEPSKVPEHALEVLYRENQTPLDFLMNVFEGGYQMFDFDRSKNYHWMINLMFVKKCIQYGGSIFVAEESGLRDYALCGIVTVLDIHKRSTLQQSTDILGNTPNAFDEDPRLEALTTLFIELYLVLNDSIKNDNHPTQTIEEWKEFYVPTINSLFIRMFRMIRKEQQPTPFVRTLLKAMFTLVEFPTNVPNDSVVTREFVPELSVFKYSLLEESFIAQAFILLSSNVEHVQLIGYAAAKLLVPIMFKTENPQVLDDDQDETEIMVANRSKLNLPVMISKSYPVDHIHKHVGPLLLSLAILPLETTKEFVLNQEQRVAYCDAIDSFFKNALNALMLDQPFDFSQVPIVCKIRKQMYFFQFRYSSHFFTAKSQEREYYLQSDLTASPLFFEKFASRLLFKSITLLPAAVRLFHKNIPNNFKPIFQEVVTKHASKLLIENELNKVQNAEFGEVLKVRTVPVTGQIISEYTVEDTKMKLTIELPRDYPLSVPAMNLDKAIVKGDRAKKWLLQLNAYLFHQNGAILEGIEMWKRNVDKGIEGAEDCTICMMTVHQQTNQLPKVKCKQCKNRFHSNCLVSSFHTYKWFESSNQSTCPLCRNNFT.

HEAT repeat units follow at residues 52–89 (SGID…ETSS), 93–129 (CYEH…KLEK), 133–170 (KGLK…ADKK), 280–318 (LNTP…SAQF), 323–345 (SLQN…HWRV), 346–384 (LQHF…NLPW), 552–589 (GDIV…TGGS), 640–663 (AENV…NEAE), 664–700 (KNVL…DFNS), 845–882 (LEKR…LDDS), 1022–1065 (TLFI…RMFR), 1078–1117 (RTLL…SLLE), 1141–1183 (AAAK…VMIS), and 1302–1340 (FKSI…KLLI). Residues 1446–1499 (CTICMMTVHQQTNQLPKVKCKQCKNRFHSNCLVSSFHTYKWFESSNQSTCPLCR) form an RING-type zinc finger.

It belongs to the LTN1 family. Component of the ribosome quality control complex (RQC), composed of at least the E3 ubiquitin ligase ltn1 and nemf. The complex probably also contains tcf25 as well as vcp/p97 and its ubiquitin-binding cofactors. RQC forms a stable complex with 60S ribosomal subunits.

The protein localises to the cytoplasm. It localises to the cytosol. It catalyses the reaction S-ubiquitinyl-[E2 ubiquitin-conjugating enzyme]-L-cysteine + [acceptor protein]-L-lysine = [E2 ubiquitin-conjugating enzyme]-L-cysteine + N(6)-ubiquitinyl-[acceptor protein]-L-lysine.. The protein operates within protein modification; protein ubiquitination. Functionally, E3 ubiquitin-protein ligase. Component of the ribosome quality control complex (RQC), a ribosome-associated complex that mediates ubiquitination and extraction of incompletely synthesized nascent chains for proteasomal degradation. Ubiquitination leads to vcp/p97 recruitment for extraction and degradation of the incomplete translation product. The sequence is that of E3 ubiquitin-protein ligase listerin from Caenorhabditis briggsae.